The sequence spans 339 residues: BTB/POZ domain-containing protein KCTD9 (339 aa).

One can recognise a KHA domain in the interval 3–82 (RVTLFLNGSP…PQTDARPPGG (80 aa)). Position 11 is a phosphoserine (S11). The BTB domain maps to 89-161 (DWLTLNVGGR…LRHGQLIVND (73 aa)). 3 consecutive Pentapeptide repeat domains span residues 223–247 (ANLQGVKMLCSNAEGASLRLCNFED), 253–292 (ANLEGANLKGVDMEGSQMTGINLRVATLKNAKLKNCNLRG), and 293–327 (ATLAGTDLENCDLSGCDLQEANLRGSNVKGAIFEE).

Forms pentamers. Component of a complex mades of five KCTD9 and five CUL3 subunits.

It functions in the pathway protein modification; protein ubiquitination. In terms of biological role, substrate-specific adapter of a BCR (BTB-CUL3-RBX1) E3 ubiquitin-protein ligase complex, which mediates the ubiquitination of target proteins, leading to their degradation by the proteasome. This is BTB/POZ domain-containing protein KCTD9 (Kctd9) from Mus musculus (Mouse).